The primary structure comprises 394 residues: NAC domain-containing protein 3 (394 aa).

Positions 3–147 (TPVGLRFCPT…TYTLCKVMFN (145 aa)) constitute an NAC domain. Residues 104 to 153 (IGEKKILMFYTSKESKSDWVIHEYHGFSHNQMMMTYTLCKVMFNGGMREK) mediate DNA binding. Disordered stretches follow at residues 152–173 (EKSS…RRDS) and 264–300 (NSLT…CDSF). Low complexity predominate over residues 155-165 (SSSPSSSGVSG). Positions 286 to 300 (PKTNSIQTSSTCDSF) are enriched in polar residues.

The protein resides in the nucleus. The protein is NAC domain-containing protein 3 (NAC003) of Arabidopsis thaliana (Mouse-ear cress).